Here is a 428-residue protein sequence, read N- to C-terminus: Light-independent protochlorophyllide reductase subunit N (428 aa).

[4Fe-4S] cluster-binding residues include cysteine 31, cysteine 56, and cysteine 117.

The protein belongs to the BchN/ChlN family. In terms of assembly, protochlorophyllide reductase is composed of three subunits; BchL, BchN and BchB. Forms a heterotetramer of two BchB and two BchN subunits. The cofactor is [4Fe-4S] cluster.

The enzyme catalyses chlorophyllide a + oxidized 2[4Fe-4S]-[ferredoxin] + 2 ADP + 2 phosphate = protochlorophyllide a + reduced 2[4Fe-4S]-[ferredoxin] + 2 ATP + 2 H2O. It functions in the pathway porphyrin-containing compound metabolism; bacteriochlorophyll biosynthesis (light-independent). Functionally, component of the dark-operative protochlorophyllide reductase (DPOR) that uses Mg-ATP and reduced ferredoxin to reduce ring D of protochlorophyllide (Pchlide) to form chlorophyllide a (Chlide). This reaction is light-independent. The NB-protein (BchN-BchB) is the catalytic component of the complex. In Rhodopseudomonas palustris (strain BisB5), this protein is Light-independent protochlorophyllide reductase subunit N.